A 102-amino-acid chain; its full sequence is Envelope protein US9 (102 aa).

Topologically, residues 1-75 (MAGQNTMEGE…KIYHRKKFCY (75 aa)) are intravirion. A Di-leucine internalization motif motif is present at residues 14 to 15 (LL). Residues 41 to 55 (EKCYYSDSENETADE) form an acidic region. Phosphoserine; by host CK2 occurs at positions 46 and 48. The chain crosses the membrane as a helical; Signal-anchor for type II membrane protein span at residues 76–96 (ITLIIVFVFAMTGAAFALGYI). The Virion surface portion of the chain corresponds to 97–102 (TSQFVG).

Belongs to the alphaherpesvirinae envelope protein US9 family. In terms of processing, phosphorylated on serines within the acidic cluster, possibly by host CK2. Phosphorylation determines whether endocytosed viral US9 traffics to the trans-Golgi network or recycles to the cell membrane.

It localises to the virion membrane. Its subcellular location is the host Golgi apparatus membrane. It is found in the host Golgi apparatus. The protein resides in the host trans-Golgi network. The protein localises to the host cell membrane. Essential for the anterograde spread of the infection throughout the host nervous system. Together with the gE/gI heterodimer, US9 is involved in the sorting and transport of viral structural components toward axon tips. This Varicella-zoster virus (strain Dumas) (HHV-3) protein is Envelope protein US9.